The primary structure comprises 343 residues: N-acetyl-gamma-glutamyl-phosphate reductase (343 aa).

Cys-146 is an active-site residue.

This sequence belongs to the NAGSA dehydrogenase family. Type 1 subfamily.

It is found in the cytoplasm. The enzyme catalyses N-acetyl-L-glutamate 5-semialdehyde + phosphate + NADP(+) = N-acetyl-L-glutamyl 5-phosphate + NADPH + H(+). It participates in amino-acid biosynthesis; L-arginine biosynthesis; N(2)-acetyl-L-ornithine from L-glutamate: step 3/4. In terms of biological role, catalyzes the NADPH-dependent reduction of N-acetyl-5-glutamyl phosphate to yield N-acetyl-L-glutamate 5-semialdehyde. This Paenarthrobacter aurescens (strain TC1) protein is N-acetyl-gamma-glutamyl-phosphate reductase.